The chain runs to 103 residues: uncharacterized protein (103 aa).

2 helical membrane-spanning segments follow: residues 13 to 33 (LLPF…YCIL) and 77 to 97 (FSIY…PYLF).

The protein localises to the endoplasmic reticulum membrane. This is an uncharacterized protein from Schizosaccharomyces pombe (strain 972 / ATCC 24843) (Fission yeast).